Here is a 318-residue protein sequence, read N- to C-terminus: Ankyrin repeat domain-containing protein 1 (318 aa).

A coiled-coil region spans residues 37–77 (ALEKQEDLKTTSKSLIELEEEKQSKEKQLKSELLKKKLEER). 5 ANK repeats span residues 151-180 (YKRT…NIEF), 184-213 (LEST…AINA), 217-246 (LLST…DLNA), 250-279 (EGDT…NLNI), and 283-314 (AGKT…KNSH).

It localises to the nucleus. Functionally, may act as a nuclear transcription factor that negatively regulates the expression of cardiac genes. The sequence is that of Ankyrin repeat domain-containing protein 1 (ankrd1) from Xenopus laevis (African clawed frog).